The sequence spans 315 residues: Biotin synthase (315 aa).

Residues 39–266 (NSLQFATLLS…KSAIRLTAGR (228 aa)) enclose the Radical SAM core domain. Residues cysteine 54, cysteine 58, and cysteine 61 each contribute to the [4Fe-4S] cluster site. The [2Fe-2S] cluster site is built by cysteine 98, cysteine 129, cysteine 189, and arginine 261.

This sequence belongs to the radical SAM superfamily. Biotin synthase family. In terms of assembly, homodimer. Requires [4Fe-4S] cluster as cofactor. The cofactor is [2Fe-2S] cluster.

The catalysed reaction is (4R,5S)-dethiobiotin + (sulfur carrier)-SH + 2 reduced [2Fe-2S]-[ferredoxin] + 2 S-adenosyl-L-methionine = (sulfur carrier)-H + biotin + 2 5'-deoxyadenosine + 2 L-methionine + 2 oxidized [2Fe-2S]-[ferredoxin]. Its pathway is cofactor biosynthesis; biotin biosynthesis; biotin from 7,8-diaminononanoate: step 2/2. In terms of biological role, catalyzes the conversion of dethiobiotin (DTB) to biotin by the insertion of a sulfur atom into dethiobiotin via a radical-based mechanism. This Legionella pneumophila (strain Paris) protein is Biotin synthase.